A 737-amino-acid chain; its full sequence is tRNA-dihydrouridine(47) synthase [NAD(P)(+)] (737 aa).

Composition is skewed to basic and acidic residues over residues 1–11 (MESQETAKRPI) and 24–33 (PATKRVKLDD). Residues 1–127 (MESQETAKRP…GKKKRPKGQN (127 aa)) form a disordered region. The span at 35–44 (PVPQIQEEPS) shows a compositional bias: low complexity. Over residues 57–82 (EDEKPTEQRQDDRDKRRGIAPIKKEY) the composition is skewed to basic and acidic residues. 2 consecutive C3H1-type zinc fingers follow at residues 142–166 (CNSV…NALH) and 187–208 (CPVW…VESH). Residues 332-334 (PLT) and Gln407 contribute to the FMN site. The Proton donor role is filled by Cys439. FMN contacts are provided by residues Lys479, His520, 577 to 579 (NGD), and 601 to 602 (GR).

It belongs to the Dus family. Dus3 subfamily. Requires FMN as cofactor.

It localises to the cytoplasm. It is found in the nucleus. The enzyme catalyses 5,6-dihydrouridine(47) in tRNA + NAD(+) = uridine(47) in tRNA + NADH + H(+). The catalysed reaction is 5,6-dihydrouridine(47) in tRNA + NADP(+) = uridine(47) in tRNA + NADPH + H(+). It carries out the reaction a 5,6-dihydrouridine in mRNA + NAD(+) = a uridine in mRNA + NADH + H(+). It catalyses the reaction a 5,6-dihydrouridine in mRNA + NADP(+) = a uridine in mRNA + NADPH + H(+). Its function is as follows. Catalyzes the synthesis of dihydrouridine, a modified base found in the D-loop of most tRNAs. Specifically modifies U47 in cytoplasmic tRNAs. Catalyzes the synthesis of dihydrouridine in some mRNAs, thereby affecting their translation. The polypeptide is tRNA-dihydrouridine(47) synthase [NAD(P)(+)] (dus-3) (Neurospora crassa (strain ATCC 24698 / 74-OR23-1A / CBS 708.71 / DSM 1257 / FGSC 987)).